We begin with the raw amino-acid sequence, 43 residues long: uncharacterized protein (43 aa).

The protein belongs to the ELIP/psbS family.

It is found in the plastid. Its subcellular location is the chloroplast. Possible role in chlorophyll and/or carotenoid binding. This is an uncharacterized protein from Cyanidium caldarium (Red alga).